A 57-amino-acid chain; its full sequence is RPRFCELPAETGLCKARIRSFHYNRAAQQCLEFIYGGCGGNANRFKTIDECHRTCVG.

A BPTI/Kunitz inhibitor domain is found at cysteine 5–cysteine 55. 3 disulfides stabilise this stretch: cysteine 5–cysteine 55, cysteine 14–cysteine 38, and cysteine 30–cysteine 51.

Belongs to the venom Kunitz-type family. Expressed by the venom gland.

It localises to the secreted. In terms of biological role, serine protease inhibitor. This Naja nivea (Cape cobra) protein is Kunitz-type serine protease inhibitor 2.